We begin with the raw amino-acid sequence, 329 residues long: Beta-ketoacyl-[acyl-carrier-protein] synthase III (329 aa).

Active-site residues include C123 and H256. An ACP-binding region spans residues 257–261 (QANIR). N286 is a catalytic residue.

Belongs to the thiolase-like superfamily. FabH family. In terms of assembly, homodimer.

Its subcellular location is the cytoplasm. It catalyses the reaction malonyl-[ACP] + acetyl-CoA + H(+) = 3-oxobutanoyl-[ACP] + CO2 + CoA. It functions in the pathway lipid metabolism; fatty acid biosynthesis. In terms of biological role, catalyzes the condensation reaction of fatty acid synthesis by the addition to an acyl acceptor of two carbons from malonyl-ACP. Catalyzes the first condensation reaction which initiates fatty acid synthesis and may therefore play a role in governing the total rate of fatty acid production. Possesses both acetoacetyl-ACP synthase and acetyl transacylase activities. Its substrate specificity determines the biosynthesis of branched-chain and/or straight-chain of fatty acids. The polypeptide is Beta-ketoacyl-[acyl-carrier-protein] synthase III (Burkholderia mallei (strain NCTC 10247)).